The primary structure comprises 1038 residues: SEH-associated protein 4 (1038 aa).

One copy of the WD 1 repeat lies at 50–90 (KDFGSITCLDYSESEIGMIGVGEKNGYLRIFNISGQNSSSP). A phosphoserine mark is found at serine 123 and serine 136. 3 WD repeats span residues 147-189 (KKQR…DSHE), 235-276 (QHPT…DQAS), and 544-587 (NTWR…SNQD).

This sequence belongs to the WD repeat mio family. Component of the SEA complex composed of at least IML1/SEA1, RTC1/SEA2, MTC5/SEA3, NPR2, NPR3, SEA4, SEC13 and SEH1.

The protein resides in the cytoplasm. It is found in the vacuole membrane. In terms of biological role, component of the SEA complex which coats the vacuolar membrane and is involved in intracellular trafficking, autophagy, response to nitrogen starvation, and amino acid biogenesis. In Saccharomyces cerevisiae (strain ATCC 204508 / S288c) (Baker's yeast), this protein is SEH-associated protein 4 (SEA4).